The sequence spans 417 residues: NADH-quinone oxidoreductase subunit D (417 aa).

The protein belongs to the complex I 49 kDa subunit family. NDH-1 is composed of 14 different subunits. Subunits NuoB, C, D, E, F, and G constitute the peripheral sector of the complex.

It localises to the cell inner membrane. The catalysed reaction is a quinone + NADH + 5 H(+)(in) = a quinol + NAD(+) + 4 H(+)(out). Functionally, NDH-1 shuttles electrons from NADH, via FMN and iron-sulfur (Fe-S) centers, to quinones in the respiratory chain. The immediate electron acceptor for the enzyme in this species is believed to be ubiquinone. Couples the redox reaction to proton translocation (for every two electrons transferred, four hydrogen ions are translocated across the cytoplasmic membrane), and thus conserves the redox energy in a proton gradient. This Ralstonia pickettii (strain 12J) protein is NADH-quinone oxidoreductase subunit D.